The chain runs to 335 residues: Phosphate acyltransferase (335 aa).

It belongs to the PlsX family. Homodimer. Probably interacts with PlsY.

The protein resides in the cytoplasm. The enzyme catalyses a fatty acyl-[ACP] + phosphate = an acyl phosphate + holo-[ACP]. The protein operates within lipid metabolism; phospholipid metabolism. Its function is as follows. Catalyzes the reversible formation of acyl-phosphate (acyl-PO(4)) from acyl-[acyl-carrier-protein] (acyl-ACP). This enzyme utilizes acyl-ACP as fatty acyl donor, but not acyl-CoA. The chain is Phosphate acyltransferase from Desulfitobacterium hafniense (strain Y51).